Consider the following 458-residue polypeptide: A-type ATP synthase subunit B (458 aa).

It belongs to the ATPase alpha/beta chains family. In terms of assembly, has multiple subunits with at least A(3), B(3), C, D, E, F, H, I and proteolipid K(x).

The protein localises to the cell membrane. Functionally, component of the A-type ATP synthase that produces ATP from ADP in the presence of a proton gradient across the membrane. The B chain is a regulatory subunit. This chain is A-type ATP synthase subunit B, found in Methanocella arvoryzae (strain DSM 22066 / NBRC 105507 / MRE50).